A 312-amino-acid chain; its full sequence is Glyoxylate/hydroxypyruvate reductase A (312 aa).

Arginine 227 is an active-site residue. Residue histidine 275 is the Proton donor of the active site.

This sequence belongs to the D-isomer specific 2-hydroxyacid dehydrogenase family. GhrA subfamily.

It is found in the cytoplasm. It carries out the reaction glycolate + NADP(+) = glyoxylate + NADPH + H(+). The catalysed reaction is (R)-glycerate + NAD(+) = 3-hydroxypyruvate + NADH + H(+). The enzyme catalyses (R)-glycerate + NADP(+) = 3-hydroxypyruvate + NADPH + H(+). Catalyzes the NADPH-dependent reduction of glyoxylate and hydroxypyruvate into glycolate and glycerate, respectively. This Klebsiella pneumoniae (strain 342) protein is Glyoxylate/hydroxypyruvate reductase A.